Consider the following 57-residue polypeptide: MATPKFKKSRANTHSRRSQWKADNVALQEVTIDGQTVRIPRRLVKAAKLGLVDVEQF.

Residues 1 to 19 are compositionally biased toward basic residues; sequence MATPKFKKSRANTHSRRSQ. The interval 1-20 is disordered; it reads MATPKFKKSRANTHSRRSQW.

It belongs to the bacterial ribosomal protein bL32 family.

This chain is Large ribosomal subunit protein bL32, found in Corynebacterium aurimucosum (strain ATCC 700975 / DSM 44827 / CIP 107346 / CN-1) (Corynebacterium nigricans).